Consider the following 279-residue polypeptide: Tryptophan 2,3-dioxygenase (279 aa).

Substrate contacts are provided by residues phenylalanine 48–histidine 52, tyrosine 110, and arginine 114. Heme is bound at residue histidine 237. Threonine 251 lines the substrate pocket.

This sequence belongs to the tryptophan 2,3-dioxygenase family. In terms of assembly, homotetramer. It depends on heme as a cofactor.

It carries out the reaction L-tryptophan + O2 = N-formyl-L-kynurenine. It functions in the pathway amino-acid degradation; L-tryptophan degradation via kynurenine pathway; L-kynurenine from L-tryptophan: step 1/2. Heme-dependent dioxygenase that catalyzes the oxidative cleavage of the L-tryptophan (L-Trp) pyrrole ring and converts L-tryptophan to N-formyl-L-kynurenine. Catalyzes the oxidative cleavage of the indole moiety. This Ruegeria sp. (strain TM1040) (Silicibacter sp.) protein is Tryptophan 2,3-dioxygenase.